Reading from the N-terminus, the 508-residue chain is DNA-directed RNA polymerase subunit Rpo1C (508 aa).

Positions 1 to 123 (MIIWKDTAKN…REKYEYEKKV (123 aa)) are unknown. The DNA-directed RNA polymerase subunit Rpo1C stretch occupies residues 124 to 508 (SSQVLDVIAE…IYKGYPKTKK (385 aa)).

Belongs to the RNA polymerase beta' chain family. As to quaternary structure, part of the RNA polymerase complex.

The protein resides in the cytoplasm. It carries out the reaction RNA(n) + a ribonucleoside 5'-triphosphate = RNA(n+1) + diphosphate. Functionally, DNA-dependent RNA polymerase (RNAP) catalyzes the transcription of DNA into RNA using the four ribonucleoside triphosphates as substrates. Forms part of the jaw domain. This is DNA-directed RNA polymerase subunit Rpo1C from Thermoplasma volcanium (strain ATCC 51530 / DSM 4299 / JCM 9571 / NBRC 15438 / GSS1).